The primary structure comprises 454 residues: UPF0210 protein Mhun_2657 (454 aa).

Belongs to the UPF0210 family.

In Methanospirillum hungatei JF-1 (strain ATCC 27890 / DSM 864 / NBRC 100397 / JF-1), this protein is UPF0210 protein Mhun_2657.